The primary structure comprises 107 residues: Putative double-stranded DNA mimic protein YE2228 (107 aa).

It belongs to the putative dsDNA mimic protein family.

May act as a double-stranded DNA (dsDNA) mimic. Probably regulates the activity of a dsDNA-binding protein. The protein is Putative double-stranded DNA mimic protein YE2228 of Yersinia enterocolitica serotype O:8 / biotype 1B (strain NCTC 13174 / 8081).